The sequence spans 135 residues: ATP synthase epsilon chain (135 aa).

This sequence belongs to the ATPase epsilon chain family. F-type ATPases have 2 components, CF(1) - the catalytic core - and CF(0) - the membrane proton channel. CF(1) has five subunits: alpha(3), beta(3), gamma(1), delta(1), epsilon(1). CF(0) has three main subunits: a, b and c.

Its subcellular location is the cell inner membrane. Its function is as follows. Produces ATP from ADP in the presence of a proton gradient across the membrane. This Granulibacter bethesdensis (strain ATCC BAA-1260 / CGDNIH1) protein is ATP synthase epsilon chain.